A 358-amino-acid chain; its full sequence is Methylthioribose-1-phosphate isomerase (358 aa).

Residues arginine 54–alanine 56, arginine 96, and glutamine 205 contribute to the substrate site. Aspartate 246 (proton donor) is an active-site residue. Glycine 256 to lysine 257 is a binding site for substrate.

It belongs to the eIF-2B alpha/beta/delta subunits family. MtnA subfamily.

It carries out the reaction 5-(methylsulfanyl)-alpha-D-ribose 1-phosphate = 5-(methylsulfanyl)-D-ribulose 1-phosphate. It functions in the pathway amino-acid biosynthesis; L-methionine biosynthesis via salvage pathway; L-methionine from S-methyl-5-thio-alpha-D-ribose 1-phosphate: step 1/6. Catalyzes the interconversion of methylthioribose-1-phosphate (MTR-1-P) into methylthioribulose-1-phosphate (MTRu-1-P). The protein is Methylthioribose-1-phosphate isomerase of Pseudomonas putida (strain ATCC 47054 / DSM 6125 / CFBP 8728 / NCIMB 11950 / KT2440).